We begin with the raw amino-acid sequence, 439 residues long: GTPase Der (439 aa).

2 consecutive EngA-type G domains span residues 4–168 (PIVA…KDDE) and 177–352 (INIA…DNYT). Residues 10-17 (GRPNVGKS), 57-61 (DTGGI), 120-123 (NKID), 183-190 (GKPNVGKS), 230-234 (DTAGL), and 295-298 (NKWD) contribute to the GTP site. In terms of domain architecture, KH-like spans 353–437 (KRVKTGVLND…GIKTEFRERK (85 aa)).

It belongs to the TRAFAC class TrmE-Era-EngA-EngB-Septin-like GTPase superfamily. EngA (Der) GTPase family. In terms of assembly, associates with the 50S ribosomal subunit.

GTPase that plays an essential role in the late steps of ribosome biogenesis. In Clostridium botulinum (strain Loch Maree / Type A3), this protein is GTPase Der.